We begin with the raw amino-acid sequence, 113 residues long: Protein FAM27E3 (113 aa).

The disordered stretch occupies residues 1–113; sequence MGIFQLLRDR…YTHRHTHRVL (113 aa). The segment covering 77 to 99 has biased composition (basic and acidic residues); the sequence is QTDRERERNTQRLRDRERRENGR. Basic residues predominate over residues 100–113; that stretch reads HTHTYTHRHTHRVL.

It belongs to the FAM27 family.

The sequence is that of Protein FAM27E3 (FAM27E3) from Homo sapiens (Human).